Here is a 498-residue protein sequence, read N- to C-terminus: Angiopoietin-1 (498 aa).

An N-terminal signal peptide occupies residues 1-15; it reads MTVFLSFAFLAAILT. The stretch at 81 to 119 forms a coiled coil; sequence QKLQHLEHVMENYTQWLQKLENYIVENMKSEMAQIQQNA. 5 N-linked (GlcNAc...) asparagine glycosylation sites follow: Asn92, Asn122, Asn154, Asn243, and Asn295. Positions 153–261 form a coiled coil; that stretch reads LNQTSRLEIQ…LELMDTVHNL (109 aa). The 221-residue stretch at 277 to 497 folds into the Fibrinogen C-terminal domain; sequence REEEKPFRDC…STTMMIRPLD (221 aa). Disulfide bonds link Cys286-Cys315 and Cys439-Cys452.

Homooligomer. Interacts with TEK/TIE2. Interacts with SVEP1/polydom. Interacts with THBD; this interaction significantly inhibits the generation of activated PC and TAFIa/CPB2 by the thrombin/thrombomodulin complex. Post-translationally, glycosylated.

The protein resides in the secreted. Functionally, binds and activates TEK/TIE2 receptor by inducing its dimerization and tyrosine phosphorylation. Plays an important role in the regulation of angiogenesis, endothelial cell survival, proliferation, migration, adhesion and cell spreading, reorganization of the actin cytoskeleton, but also maintenance of vascular quiescence. Required for normal angiogenesis and heart development during embryogenesis. After birth, activates or inhibits angiogenesis, depending on the context. Inhibits angiogenesis and promotes vascular stability in quiescent vessels, where endothelial cells have tight contacts. In quiescent vessels, ANGPT1 oligomers recruit TEK to cell-cell contacts, forming complexes with TEK molecules from adjoining cells, and this leads to preferential activation of phosphatidylinositol 3-kinase and the AKT1 signaling cascades. In migrating endothelial cells that lack cell-cell adhesions, ANGT1 recruits TEK to contacts with the extracellular matrix, leading to the formation of focal adhesion complexes, activation of PTK2/FAK and of the downstream kinases MAPK1/ERK2 and MAPK3/ERK1, and ultimately to the stimulation of sprouting angiogenesis. Mediates blood vessel maturation/stability. Implicated in endothelial developmental processes later and distinct from that of VEGF. Appears to play a crucial role in mediating reciprocal interactions between the endothelium and surrounding matrix and mesenchyme. This is Angiopoietin-1 (ANGPT1) from Homo sapiens (Human).